Reading from the N-terminus, the 953-residue chain is Coatomer subunit beta (953 aa).

Thr2 carries the post-translational modification N-acetylthreonine. 6 HEAT repeats span residues 96-131 (HEMI…KEAE), 132-168 (LLEP…NFEH), 240-276 (SERA…SAPT), 277-314 (AIKA…HPAH), 316-353 (RVLQ…SRNV), and 396-433 (DMAA…RFDN). At Lys494 the chain carries N6-acetyllysine.

In terms of assembly, oligomeric complex that consists of at least the alpha, beta, beta', gamma, delta, epsilon and zeta subunits. Interacts with SCYL1. Interacts with COPG1. Interacts (via trunk domain) with ARF1 (via switch I region); the interaction is direct. Interacts with KCNK2/TREK (via N-terminus); this interaction increases the channel-mediated whole cell currents and promotes plasma membrane expression of KCNK2/TREK. Interacts with anthrax lethal factor (LF); this interaction may facilitate endosomal vesicle membrane translocation of LF and its release from the lumen of endosomal vesicles to external milieu. Interacts with CAPN8 and PRKCE. Interacts with ARF1 (myristoylated); this interaction is required for binding of COPB1 to Golgi membranes. Interacts with STX17. Interacts with TMEM115. Interacts with HLA-G-B2M complex; this interaction mediates the endoplasmic reticulum (ER) retrieval of HLA-E-B2M complexes that bind low affinity peptides. Interacts with TMEM41B. (Microbial infection) Interacts (via C-terminus) with HIV-1 Nef; the interaction is direct. In terms of processing, proteolytically cleaved between Ser-528 and Ser-529 by CAPN8.

The protein resides in the cytoplasm. The protein localises to the golgi apparatus membrane. Its subcellular location is the cytoplasmic vesicle. It is found in the COPI-coated vesicle membrane. It localises to the cell membrane. The protein resides in the endoplasmic reticulum-Golgi intermediate compartment. Its function is as follows. The coatomer is a cytosolic protein complex that binds to dilysine motifs and reversibly associates with Golgi non-clathrin-coated vesicles, which further mediate biosynthetic protein transport from the ER, via the Golgi up to the trans Golgi network. Coatomer complex is required for budding from Golgi membranes, and is essential for the retrograde Golgi-to-ER transport of dilysine-tagged proteins. In mammals, the coatomer can only be recruited by membranes associated to ADP-ribosylation factors (ARFs), which are small GTP-binding proteins; the complex also influences the Golgi structural integrity, as well as the processing, activity, and endocytic recycling of LDL receptors. Plays a functional role in facilitating the transport of kappa-type opioid receptor mRNAs into axons and enhances translation of these proteins. Required for limiting lipid storage in lipid droplets. Involved in lipid homeostasis by regulating the presence of perilipin family members PLIN2 and PLIN3 at the lipid droplet surface and promoting the association of adipocyte surface triglyceride lipase (PNPLA2) with the lipid droplet to mediate lipolysis. Involved in the Golgi disassembly and reassembly processes during cell cycle. Involved in autophagy by playing a role in early endosome function. Plays a role in organellar compartmentalization of secretory compartments including endoplasmic reticulum (ER)-Golgi intermediate compartment (ERGIC), Golgi, trans-Golgi network (TGN) and recycling endosomes, and in biosynthetic transport of CAV1. Promotes degradation of Nef cellular targets CD4 and MHC class I antigens by facilitating their trafficking to degradative compartments. In Homo sapiens (Human), this protein is Coatomer subunit beta.